The chain runs to 356 residues: Glutamate 5-kinase (356 aa).

Lys-6 provides a ligand contact to ATP. The substrate site is built by Ser-46, Asp-135, and Asn-147. 202–208 contributes to the ATP binding site; sequence TGGMRSK. Residues 265–342 enclose the PUA domain; the sequence is KGIIVVDRGA…SEVRKLLNTT (78 aa).

It belongs to the glutamate 5-kinase family.

It is found in the cytoplasm. It carries out the reaction L-glutamate + ATP = L-glutamyl 5-phosphate + ADP. The protein operates within amino-acid biosynthesis; L-proline biosynthesis; L-glutamate 5-semialdehyde from L-glutamate: step 1/2. Functionally, catalyzes the transfer of a phosphate group to glutamate to form L-glutamate 5-phosphate. This Aquifex aeolicus (strain VF5) protein is Glutamate 5-kinase.